The chain runs to 387 residues: Eukaryotic translation initiation factor 3 subunit M (387 aa).

The PCI domain occupies 181 to 340 (LSSKVMIELL…HKVHITSTMH (160 aa)).

This sequence belongs to the eIF-3 subunit M family. Component of the eukaryotic translation initiation factor 3 (eIF-3) complex. The eIF-3 complex interacts with pix.

Its subcellular location is the cytoplasm. The protein resides in the golgi apparatus. Functionally, component of the eukaryotic translation initiation factor 3 (eIF-3) complex, which is involved in protein synthesis of a specialized repertoire of mRNAs and, together with other initiation factors, stimulates binding of mRNA and methionyl-tRNAi to the 40S ribosome. The eIF-3 complex specifically targets and initiates translation of a subset of mRNAs involved in cell proliferation. The protein is Eukaryotic translation initiation factor 3 subunit M of Drosophila erecta (Fruit fly).